The sequence spans 450 residues: Gluconate permease (450 aa).

The next 12 membrane-spanning stretches (helical) occupy residues 6-26 (HDAYLLLDALVTIIGLIVLIT), 30-50 (VHPFIALIIAAGFLGLTSGMP), 60-80 (DGFGGVLGFVGVILALGTMLG), 116-136 (VGIPLFFEIGFILLIPLVFIV), 142-162 (VSLIKIGIPLLAGLSAVHGLV), 183-203 (ILYGLIVALPTAAIAGPLFGA), 233-253 (FGVTLATVLLPVFLMLLKTFA), 269-289 (MIGHPISALLLALLVALYTFG), 312-332 (AIVMIIGAGGGFKQMLVASGV), 338-358 (HLAVNAQISPILLAWLVAAVI), 366-386 (TVATITGAGIVVPVIDLIPGV), and 430-450 (AMETILSVVGLVFILLLSLVL).

This sequence belongs to the GntP permease family.

It localises to the cell inner membrane. It participates in carbohydrate acid metabolism; D-gluconate degradation. This chain is Gluconate permease (gnuT), found in Pseudomonas aeruginosa (strain ATCC 15692 / DSM 22644 / CIP 104116 / JCM 14847 / LMG 12228 / 1C / PRS 101 / PAO1).